Consider the following 80-residue polypeptide: Defensin-like protein 51 (80 aa).

The N-terminal stretch at 1–27 is a signal peptide; sequence MGFTKILVTFFLVGLLVISSSPQNAIA. 4 disulfide bridges follow: Cys-39/Cys-79, Cys-43/Cys-66, Cys-52/Cys-77, and Cys-56/Cys-78.

This sequence belongs to the DEFL family.

Its subcellular location is the secreted. The sequence is that of Defensin-like protein 51 (LCR48) from Arabidopsis thaliana (Mouse-ear cress).